The chain runs to 206 residues: Dihydrofolate reductase (206 aa).

Positions 6–204 (SLTLIVALTT…FDYEFEMWTR (199 aa)) constitute a DHFR domain. Residues Ala-12 and 18–24 (GIGRSNS) contribute to the NADP(+) site. A substrate-binding site is contributed by 32 to 37 (EISYFK). 59 to 61 (RKT) serves as a coordination point for NADP(+). A substrate-binding site is contributed by Arg-75. Residues 81 to 83 (TRN) and 124 to 131 (GGAQLYKA) each bind NADP(+).

The protein belongs to the dihydrofolate reductase family.

The catalysed reaction is (6S)-5,6,7,8-tetrahydrofolate + NADP(+) = 7,8-dihydrofolate + NADPH + H(+). The protein operates within cofactor biosynthesis; tetrahydrofolate biosynthesis; 5,6,7,8-tetrahydrofolate from 7,8-dihydrofolate: step 1/1. Functionally, key enzyme in folate metabolism. Catalyzes an essential reaction for de novo glycine and purine synthesis, and for DNA precursor synthesis. This is Dihydrofolate reductase from Pneumocystis carinii.